Here is a 474-residue protein sequence, read N- to C-terminus: Cyclin-dependent kinase 2 homolog (474 aa).

In terms of domain architecture, Protein kinase spans 7–446 (YRHVVKLGEG…AAEAVHHPYL (440 aa)). ATP contacts are provided by residues 13–21 (LGEGTYGMV) and Lys-36. At Thr-17 the chain carries Phosphothreonine. Tyr-18 carries the post-translational modification Phosphotyrosine. Asp-131 functions as the Proton acceptor in the catalytic mechanism. Residues 150–200 (TALPSSPQQSMRVPHAGGTNGEAGRASANGNEHAPRPTAAEGSVSPWEEAA) are disordered. Ser-230 is modified (phosphoserine). Positions 334-354 (QQLQAQQQQPQQGSSPSHSSS) are enriched in low complexity. The interval 334–356 (QQLQAQQQQPQQGSSPSHSSSRA) is disordered.

This sequence belongs to the protein kinase superfamily. CMGC Ser/Thr protein kinase family. CDC2/CDKX subfamily. As to quaternary structure, may form a complex composed of at least the catalytic subunit CRK2 and a cyclin. Mg(2+) is required as a cofactor.

It is found in the cytoplasm. It carries out the reaction L-seryl-[protein] + ATP = O-phospho-L-seryl-[protein] + ADP + H(+). The catalysed reaction is L-threonyl-[protein] + ATP = O-phospho-L-threonyl-[protein] + ADP + H(+). The enzyme catalyses [DNA-directed RNA polymerase] + ATP = phospho-[DNA-directed RNA polymerase] + ADP + H(+). With respect to regulation, phosphorylation at Thr-17 or Tyr-18 inactivates the enzyme, while phosphorylation at Ser-230 activates it. Serine/threonine-protein kinase. Involved in the control of the cell cycle. Required for entry into S-phase and mitosis. Probable component of the kinase complex that phosphorylates the repetitive C-terminus of RNA polymerase II. This Crithidia fasciculata protein is Cyclin-dependent kinase 2 homolog.